Here is a 507-residue protein sequence, read N- to C-terminus: Mandelamide hydrolase (507 aa).

Residues K100 and S180 each act as charge relay system in the active site. S204 functions as the Acyl-ester intermediate in the catalytic mechanism.

In terms of assembly, monomer.

The catalysed reaction is (R)-mandelamide + H2O = (R)-mandelate + NH4(+). Inhibited by 3,4-dichloroisocoumarin and PMSF. Hydrolyzes both the R- and the S-enantiomers of mandelamide, and phenylacetamide. Has lower activity on 3-phenylpropionaide and lactamide. Does not hydrolyze benzamide. Hydrolyzes esters and amides with little steric bulk. Preferentially hydrolyzes aromatic substrates. The chain is Mandelamide hydrolase from Pseudomonas putida (Arthrobacter siderocapsulatus).